A 213-amino-acid chain; its full sequence is Thiamine-phosphate synthase (213 aa).

4-amino-2-methyl-5-(diphosphooxymethyl)pyrimidine-binding positions include 38–42 (QLRIK) and Asn70. Mg(2+)-binding residues include Asp71 and Asp90. Ser109 provides a ligand contact to 4-amino-2-methyl-5-(diphosphooxymethyl)pyrimidine. 135 to 137 (TQT) contributes to the 2-[(2R,5Z)-2-carboxy-4-methylthiazol-5(2H)-ylidene]ethyl phosphate binding site. Lys138 serves as a coordination point for 4-amino-2-methyl-5-(diphosphooxymethyl)pyrimidine. Residues Gly168 and 188–189 (VS) each bind 2-[(2R,5Z)-2-carboxy-4-methylthiazol-5(2H)-ylidene]ethyl phosphate.

This sequence belongs to the thiamine-phosphate synthase family. Mg(2+) serves as cofactor.

It carries out the reaction 2-[(2R,5Z)-2-carboxy-4-methylthiazol-5(2H)-ylidene]ethyl phosphate + 4-amino-2-methyl-5-(diphosphooxymethyl)pyrimidine + 2 H(+) = thiamine phosphate + CO2 + diphosphate. It catalyses the reaction 2-(2-carboxy-4-methylthiazol-5-yl)ethyl phosphate + 4-amino-2-methyl-5-(diphosphooxymethyl)pyrimidine + 2 H(+) = thiamine phosphate + CO2 + diphosphate. The enzyme catalyses 4-methyl-5-(2-phosphooxyethyl)-thiazole + 4-amino-2-methyl-5-(diphosphooxymethyl)pyrimidine + H(+) = thiamine phosphate + diphosphate. Its pathway is cofactor biosynthesis; thiamine diphosphate biosynthesis; thiamine phosphate from 4-amino-2-methyl-5-diphosphomethylpyrimidine and 4-methyl-5-(2-phosphoethyl)-thiazole: step 1/1. Functionally, condenses 4-methyl-5-(beta-hydroxyethyl)thiazole monophosphate (THZ-P) and 2-methyl-4-amino-5-hydroxymethyl pyrimidine pyrophosphate (HMP-PP) to form thiamine monophosphate (TMP). This Pectobacterium atrosepticum (strain SCRI 1043 / ATCC BAA-672) (Erwinia carotovora subsp. atroseptica) protein is Thiamine-phosphate synthase.